A 63-amino-acid chain; its full sequence is Beta-defensin 38 (63 aa).

Positions 1–21 (MKISCFLLLVLSLYLFQVNQA) are cleaved as a signal peptide. Disulfide bonds link cysteine 29–cysteine 58, cysteine 36–cysteine 51, and cysteine 41–cysteine 59.

Belongs to the beta-defensin family.

Its subcellular location is the secreted. Functionally, has antibacterial activity. This chain is Beta-defensin 38 (Defb38), found in Rattus norvegicus (Rat).